The following is a 1011-amino-acid chain: Liprin-beta-1 (1011 aa).

Phosphoserine is present on Ser-37. Thr-39 carries the post-translational modification Phosphothreonine. Ser-40 carries the post-translational modification Phosphoserine. Residues 156 to 405 are a coiled coil; it reads QQELLSRTSL…VPEEFHTTIL (250 aa). Lys-322 carries the post-translational modification N6-acetyllysine. 2 disordered regions span residues 420 to 439 and 463 to 634; these read ETSE…EEND and KSSS…RDLG. Residues Ser-434 and Ser-466 each carry the phosphoserine modification. Residues 470–492 are compositionally biased toward basic and acidic residues; that stretch reads LKKETSDGEKETIQKTSEDRAPA. Lys-471 participates in a covalent cross-link: Glycyl lysine isopeptide (Lys-Gly) (interchain with G-Cter in SUMO2). Ser-523 and Ser-540 each carry phosphoserine. Basic and acidic residues predominate over residues 546 to 556; the sequence is ETEKETAEHLD. Ser-579 carries the post-translational modification Phosphoserine. Residues 584-598 are compositionally biased toward basic residues; the sequence is KKSRGIMKLFGKLRR. A phosphoserine mark is found at Ser-601 and Ser-636. SAM domains are found at residues 647-711 and 719-782; these read WTKE…LGSE and LDFN…LRIN. At Ser-794 the chain carries Phosphoserine. The SAM 3 domain maps to 804–876; it reads VQKWTNHRVM…ATHFNLLIGA (73 aa). Phosphoserine occurs at positions 999, 1001, and 1003. A Phosphothreonine modification is found at Thr-1005.

It belongs to the liprin family. Liprin-beta subfamily. Forms homodimers and heterodimers. Interacts with S100A4 in a Ca(2+)-dependent mode. Part of a cortical microtubule stabilization complex (CMSC) composed of KANK1, PPFIA1, PPFIBP1, ERC1/ELKS, PHLDB2/LL5beta, CLASPs, KIF21A and possibly additional interactors; within CMSCs KANK1 and PHLDB2/LL5beta seem to be the core components for recruiting microtubule-binding proteins KIF21A and CLASPs, whereas PPFIA1, PPFIBP1 and ERC1/ELKS serve as scaffolds for protein clustering. Interacts with KANK1 (via CC1 domain, residues 244-339). In terms of tissue distribution, widely expressed. Absent in liver.

It is found in the cytoplasm. The protein localises to the cell cortex. In terms of biological role, may regulate the disassembly of focal adhesions. Did not bind receptor-like tyrosine phosphatases type 2A. The polypeptide is Liprin-beta-1 (PPFIBP1) (Homo sapiens (Human)).